We begin with the raw amino-acid sequence, 104 residues long: N(4)-acetylcytidine amidohydrolase (104 aa).

The region spanning Ile-6–Leu-102 is the ASCH domain. The active-site Proton acceptor is Lys-21. Thr-24 functions as the Nucleophile in the catalytic mechanism. Glu-74 functions as the Proton donor in the catalytic mechanism.

The protein belongs to the N(4)-acetylcytidine amidohydrolase family.

It catalyses the reaction N(4)-acetylcytidine + H2O = cytidine + acetate + H(+). The enzyme catalyses N(4)-acetyl-2'-deoxycytidine + H2O = 2'-deoxycytidine + acetate + H(+). The catalysed reaction is N(4)-acetylcytosine + H2O = cytosine + acetate + H(+). Catalyzes the hydrolysis of N(4)-acetylcytidine (ac4C). This chain is N(4)-acetylcytidine amidohydrolase, found in Haemophilus influenzae (strain PittEE).